The sequence spans 217 residues: Phosphoenolpyruvate guanylyltransferase (217 aa).

Phosphoenolpyruvate-binding residues include threonine 150, glycine 165, and serine 168.

This sequence belongs to the CofC family.

It carries out the reaction phosphoenolpyruvate + GTP + H(+) = enolpyruvoyl-2-diphospho-5'-guanosine + diphosphate. Its pathway is cofactor biosynthesis; coenzyme F420 biosynthesis. In terms of biological role, guanylyltransferase that catalyzes the activation of phosphoenolpyruvate (PEP) as enolpyruvoyl-2-diphospho-5'-guanosine, via the condensation of PEP with GTP. It is involved in the biosynthesis of coenzyme F420, a hydride carrier cofactor. This chain is Phosphoenolpyruvate guanylyltransferase, found in Mycobacterium ulcerans (strain Agy99).